Consider the following 171-residue polypeptide: UPF0398 protein STER_0279 (171 aa).

It belongs to the UPF0398 family.

This chain is UPF0398 protein STER_0279, found in Streptococcus thermophilus (strain ATCC BAA-491 / LMD-9).